An 815-amino-acid polypeptide reads, in one-letter code: (E)-gamma-bisabolene synthase (815 aa).

4 residues coordinate Mg(2+): D561, D565, D709, and E717. Residues D561–D565 carry the DDXXD motif motif.

It belongs to the terpene synthase family. Tpsd subfamily. It depends on Mg(2+) as a cofactor. Requires Mn(2+) as cofactor.

Its subcellular location is the cytoplasm. It carries out the reaction (2E,6E)-farnesyl diphosphate = (E)-gamma-bisabolene + diphosphate. Its pathway is terpene metabolism; oleoresin biosynthesis. Its function is as follows. Involved in defensive oleoresin formation in conifers in response to insect attack or other injury. Involved in sesquiterpene (C15) olefins biosynthesis. Produces mainly (E)-gamma-bisabolene when used with farnesyl diphosphate as substrate. No activity with geranyl diphosphate or geranylgeranyl diphosphate. The sequence is that of (E)-gamma-bisabolene synthase (TPS3) from Pseudotsuga menziesii (Douglas-fir).